The primary structure comprises 23 residues: Basic phospholipase A2 intermexin (23 aa).

Belongs to the phospholipase A2 family. Group II subfamily. Requires Ca(2+) as cofactor. Contains 7 disulfide bonds. Expressed by the venom gland.

The protein resides in the secreted. It catalyses the reaction a 1,2-diacyl-sn-glycero-3-phosphocholine + H2O = a 1-acyl-sn-glycero-3-phosphocholine + a fatty acid + H(+). In terms of biological role, snake venom phospholipase A2 (PLA2) that shows presynaptic neurotoxicity and low myotoxicity. PLA2 catalyzes the calcium-dependent hydrolysis of the 2-acyl groups in 3-sn-phosphoglycerides. The chain is Basic phospholipase A2 intermexin from Gloydius intermedius (Central Asian pit viper).